The primary structure comprises 338 residues: Methionine import ATP-binding protein MetN 2 (338 aa).

An ABC transporter domain is found at 2–242 (IEIEKVCVDF…PQHAFTQQLV (241 aa)). An ATP-binding site is contributed by 39-46 (GTSGAGKS).

Belongs to the ABC transporter superfamily. Methionine importer (TC 3.A.1.24) family. The complex is composed of two ATP-binding proteins (MetN), two transmembrane proteins (MetI) and a solute-binding protein (MetQ).

It is found in the cell inner membrane. It carries out the reaction L-methionine(out) + ATP + H2O = L-methionine(in) + ADP + phosphate + H(+). It catalyses the reaction D-methionine(out) + ATP + H2O = D-methionine(in) + ADP + phosphate + H(+). Functionally, part of the ABC transporter complex MetNIQ involved in methionine import. Responsible for energy coupling to the transport system. This Salmonella typhimurium (strain LT2 / SGSC1412 / ATCC 700720) protein is Methionine import ATP-binding protein MetN 2.